The following is a 352-amino-acid chain: Putative hetero-Diels-Alderase (352 aa).

Positions M1–T20 are cleaved as a signal peptide. 6 N-linked (GlcNAc...) asparagine glycosylation sites follow: N26, N41, N47, N135, N211, and N310.

The protein belongs to the eupF Diels-Alderase family.

Its pathway is secondary metabolite biosynthesis; terpenoid biosynthesis. Its function is as follows. Putative hetero-Diels-Alderase; part of the gene cluster that mediates the biosynthesis of eupenifeldin, a bistropolone meroterpenoid that acts as an antitumor agent. The first step of eupenifeldin biosynthesis is the biosynthesis of 3-methylorcinaldehyde performed by the non-reducing polyketide synthase eupA. Oxidative dearomatization of 3-methylorcinaldehyde likely catalyzed by the FAD-dependent monooxygenase eupB is followed by oxidative ring expansion by the 2-oxoglutarate-dependent dioxygenase eupC to provide the first tropolone metabolite, tropolone stipitaldehyde. In parallel, generation of sesquiterpene alpha-humulene from farnesylpyrophosphate (FPP) is catalyzed by the terpene cyclase eupE. The cytochrome P450 monooxygenase eupD then hydroxylates humulene to humulenol. The putative Diels-Alderase eupF probably catalyzes the formation of the tropolone-humulene skeleton by linking humulenol and the polyketide moiety. The short-chain dehydrogenase/reductase eupG and the flavin-dependent monooxygenase eupH are also essential for eupenifeldin biosynthesis and are likely the additional decorating enzymes of the tropolone-humulene skeleton to produce final eupenifeldin or derivatives. The chain is Putative hetero-Diels-Alderase from Phoma sp.